The following is a 150-amino-acid chain: Ribonuclease H (150 aa).

One can recognise an RNase H type-1 domain in the interval 1-141; it reads MRPVIIHTDG…ADQLARDGLT (141 aa). Residues Asp9, Glu47, Asp69, and Asp133 each contribute to the Mg(2+) site.

It belongs to the RNase H family. In terms of assembly, monomer. Mg(2+) is required as a cofactor.

The protein localises to the cytoplasm. The catalysed reaction is Endonucleolytic cleavage to 5'-phosphomonoester.. Endonuclease that specifically degrades the RNA of RNA-DNA hybrids. The sequence is that of Ribonuclease H from Rhodopseudomonas palustris (strain BisB5).